A 146-amino-acid polypeptide reads, in one-letter code: MNTNYWIGVVSEQHVLKGAAGGFAQLCHGKKAPLAKMKEGDWLIYYSPRDAYPDGKLLRSFTAIGKVKSGNIYPYQMAPNFIPYRLDIDYYPCHKIGFYDIKSKLEFVQETKHLGFLFRRGHFEISKKDFLTIAQAMGVNISGMAL.

Belongs to the UPF0310 family.

In Bacillus subtilis (strain 168), this protein is UPF0310 protein YdcG (ydcG).